A 627-amino-acid chain; its full sequence is Transketolase-like protein 2 (627 aa).

Position 39 (His39) interacts with substrate. Residues Ser42, His79, and 125-127 (GSL) each bind thiamine diphosphate. Asp157 is a binding site for Mg(2+). The thiamine diphosphate site is built by Gly158 and Asn187. Positions 187 and 189 each coordinate Mg(2+). Positions 249 and 263 each coordinate thiamine diphosphate. His263, Arg323, and Ser350 together coordinate substrate. The thiamine diphosphate site is built by Glu371 and Phe397. The active-site Proton donor is Glu371. Substrate is bound by residues His421 and Asp429. Gln433 provides a ligand contact to thiamine diphosphate. Arg479 contributes to the substrate binding site.

Belongs to the transketolase family. Homodimer. Mg(2+) serves as cofactor. It depends on Ca(2+) as a cofactor. The cofactor is Mn(2+). Co(2+) is required as a cofactor. Requires thiamine diphosphate as cofactor.

The enzyme catalyses D-sedoheptulose 7-phosphate + D-glyceraldehyde 3-phosphate = aldehydo-D-ribose 5-phosphate + D-xylulose 5-phosphate. Its function is as follows. Plays an essential role in total transketolase activity and cell proliferation in cancer cells; after transfection with anti-TKTL1 siRNA, total transketolase activity dramatically decreases and proliferation was significantly inhibited in cancer cells. Plays a pivotal role in carcinogenesis. The sequence is that of Transketolase-like protein 2 (Tktl2) from Mus musculus (Mouse).